The chain runs to 252 residues: Triosephosphate isomerase (252 aa).

10–12 contacts substrate; that stretch reads NWK. H96 acts as the Electrophile in catalysis. Catalysis depends on E168, which acts as the Proton acceptor. Substrate is bound by residues G174, S214, and 235-236; that span reads GG.

Belongs to the triosephosphate isomerase family. As to quaternary structure, homodimer.

The protein resides in the cytoplasm. It catalyses the reaction D-glyceraldehyde 3-phosphate = dihydroxyacetone phosphate. It functions in the pathway carbohydrate biosynthesis; gluconeogenesis. It participates in carbohydrate degradation; glycolysis; D-glyceraldehyde 3-phosphate from glycerone phosphate: step 1/1. Functionally, involved in the gluconeogenesis. Catalyzes stereospecifically the conversion of dihydroxyacetone phosphate (DHAP) to D-glyceraldehyde-3-phosphate (G3P). This Streptococcus pyogenes serotype M1 protein is Triosephosphate isomerase.